A 38-amino-acid chain; its full sequence is Potassium channel toxin alpha-KTx 3.2 (38 aa).

3 disulfides stabilise this stretch: Cys8/Cys28, Cys14/Cys33, and Cys18/Cys35.

Belongs to the short scorpion toxin superfamily. Potassium channel inhibitor family. Alpha-KTx 03 subfamily. As to expression, expressed by the venom gland.

It localises to the secreted. Potent inhibitor of the Shaker potassium channels and its mammalian homologs (Kv1.1/KCNA1, Kv1.3/KCNA3, Kv1.6/KCNA6) (Ki&lt;1 nM for all channels). Also blocks Kv1.2/KCNA2 (IC(50)=26.8 nM). It also shows a weak interaction with nicotinic acetylcholine receptors (nAChR), suggesting it may weakly inhibit it. This is Potassium channel toxin alpha-KTx 3.2 from Leiurus hebraeus (Hebrew deathstalker scorpion).